Here is a 144-residue protein sequence, read N- to C-terminus: Large ribosomal subunit protein uL15 (144 aa).

The interval 1 to 57 (MQLNDLRSAPGARREKHRPGRGIGSGLGKTGGRGHKGLTSRSGGKVAPGFEGGQQPL) is disordered. The span at 21–31 (RGIGSGLGKTG) shows a compositional bias: gly residues.

This sequence belongs to the universal ribosomal protein uL15 family. As to quaternary structure, part of the 50S ribosomal subunit.

Functionally, binds to the 23S rRNA. The sequence is that of Large ribosomal subunit protein uL15 from Pseudomonas aeruginosa (strain LESB58).